We begin with the raw amino-acid sequence, 382 residues long: Lycopene beta-cyclase (382 aa).

6 to 36 is a binding site for NAD(+); the sequence is DLILVGAGLANGLIALRLQQQQPDMRILLID.

Belongs to the lycopene cyclase family. FAD is required as a cofactor.

It localises to the cell inner membrane. The enzyme catalyses a carotenoid psi-end group = a carotenoid beta-end derivative. It carries out the reaction all-trans-lycopene = gamma-carotene. The catalysed reaction is gamma-carotene = all-trans-beta-carotene. It catalyses the reaction all-trans-neurosporene = beta-zeacarotene. The enzyme catalyses beta-zeacarotene = 7,8-dihydro-beta-carotene. It participates in carotenoid biosynthesis; beta-carotene biosynthesis. Its activity is regulated as follows. Activity is increased in the presence of NAD(P)H. NADPH is not involved directly in the cyclization reaction, but must play an indirect role, e.g. as an allosteric activator. Its function is as follows. Catalyzes the double cyclization reaction which converts lycopene to beta-carotene. Also catalyzes the double cyclization reaction which converts neurosporene to 7,8-dihydro-beta-carotene via monocyclic beta-zeacarotene. May also convert zeta-carotene to bicyclic 7,8,7',8'-tetrahydro-beta-carotene. The polypeptide is Lycopene beta-cyclase (Pantoea ananas (Erwinia uredovora)).